The primary structure comprises 453 residues: Sodium/alanine symporter AgcS (453 aa).

Residues 1–17 (MDFVSLVNTVNSFVWGP) lie on the Extracellular side of the membrane. A helical membrane pass occupies residues 18–32 (YMLVLLLGTGIFLTL). The Cytoplasmic portion of the chain corresponds to 33 to 67 (RLGFMQIHTLPYALKLAFSKHQDETSEGDISHFQA). The chain crosses the membrane as a helical span at residues 68–89 (LMTALAATIGTGNIAGVATAYV). Threonine 75 contacts D-alanine. The L-alanine site is built by threonine 75 and glycine 79. Asparagine 80 serves as a coordination point for D-alanine. Residues 90-92 (LGG) are Extracellular-facing. A helical transmembrane segment spans residues 93-111 (PGAIFWMWVTAFFGMATKY). The Cytoplasmic segment spans residues 112–148 (AEAVLAIKYRTVDDNGEMAGGPMYFLEKGLPDHGLGK). The helical transmembrane segment at 149 to 179 (ILGVAFAFFGAFAAFGIGNMVQTNSVADAVA) threads the bilayer. Glutamine 170 contacts D-alanine. Position 170 (glutamine 170) interacts with L-alanine. The Extracellular segment spans residues 180–186 (SNFGVDP). Residues 187 to 202 (LITGFVLAIFTAAVIL) traverse the membrane as a helical segment. Over 203–206 (GGIK) the chain is Cytoplasmic. Residues 207–233 (SIGKATGIIVPFMAVFYILAGLVILAM) traverse the membrane as a helical segment. Topologically, residues 234 to 258 (NIGYIIPAFGTIFSSAFNFSAGFGA) are extracellular. The helical transmembrane segment at 259–274 (LIGTAIMWGVKRGVFS) threads the bilayer. 273-274 (FS) contacts D-alanine. Residue 273-276 (FSNE) participates in L-alanine binding. Topologically, residues 275-300 (NEAGLGSAPIAAAAAKTDHPGRQALV) are cytoplasmic. A helical membrane pass occupies residues 301-322 (SMTGTFLDTIVVCTITGLVLTI). Topologically, residues 323–350 (AGLKAFPGLTDLTGASLTAASFDALMPM) are extracellular. A helical membrane pass occupies residues 351–378 (GGLIVTIGLVFFAYSTVLGWSYYGEKCF). At 379 to 386 (EYLIGTKG) the chain is on the cytoplasmic side. A helical membrane pass occupies residues 387–403 (IRLYRIAFVLVAFWGAT). At 404-408 (ASLPL) the chain is on the extracellular side. The chain crosses the membrane as a helical span at residues 409–430 (VWNIADTLNGAMAIPNLIGLLL). At 431 to 453 (LSGVVVSETKAFNEIRKNEAKNA) the chain is on the cytoplasmic side.

The protein belongs to the alanine or glycine:cation symporter (AGCS) (TC 2.A.25) family.

Its subcellular location is the cell membrane. The catalysed reaction is D-alanine(in) + Na(+)(in) = D-alanine(out) + Na(+)(out). The enzyme catalyses L-alanine(in) + Na(+)(in) = L-alanine(out) + Na(+)(out). It carries out the reaction glycine(in) + Na(+)(in) = glycine(out) + Na(+)(out). In terms of biological role, catalyzes the sodium-dependent uptake of extracellular D-alanine and L-alanine. Can also transport glycine. Binds glycine and both enantiomers of alanine, while strictly excluding other amino acids. The chain is Sodium/alanine symporter AgcS from Methanococcus maripaludis (strain DSM 14266 / JCM 13030 / NBRC 101832 / S2 / LL).